The sequence spans 460 residues: Elongation factor 1-alpha-A (460 aa).

The residue at position 2 (Gly2) is a N,N,N-trimethylglycine. Lys3 is modified (N6,N6-dimethyllysine; alternate). Lys3 bears the N6-methyllysine; alternate mark. A tr-type G domain is found at 5–240 (KGHINVVVIG…DSIEPPARPT (236 aa)). The segment at 14–21 (GHVDSGKS) is G1. 14-21 (GHVDSGKS) contacts GTP. Lys30 bears the N6-methyllysine mark. The segment at 70–74 (GITID) is G2. Lys79 bears the N6,N6,N6-trimethyllysine mark. The interval 91 to 94 (DAPG) is G3. Residues 91–95 (DAPGH) and 153–156 (NKMD) contribute to the GTP site. The G4 stretch occupies residues 153-156 (NKMD). The tract at residues 192-194 (SGF) is G5. Lys316 is subject to N6,N6-dimethyllysine; alternate. Lys316 bears the N6-methyllysine; alternate mark. N6-methyllysine is present on Lys390.

The protein belongs to the TRAFAC class translation factor GTPase superfamily. Classic translation factor GTPase family. EF-Tu/EF-1A subfamily.

The protein localises to the cytoplasm. In terms of biological role, this protein promotes the GTP-dependent binding of aminoacyl-tRNA to the A-site of ribosomes during protein biosynthesis. In Schizosaccharomyces pombe (strain 972 / ATCC 24843) (Fission yeast), this protein is Elongation factor 1-alpha-A (tef101).